Here is a 115-residue protein sequence, read N- to C-terminus: Virion-associated protein (115 aa).

2 coiled-coil regions span residues 1-28 and 33-54; these read MAAT…MLER and KPTG…KIDQ. The span at 96–106 shows a compositional bias: polar residues; that stretch reads GNEELGSSGNP. Positions 96-115 are disordered; it reads GNEELGSSGNPNAVKWPPRK.

It belongs to the caulimovirus ORF III family. Homotetramer, through coiled-coil domain. Homotrimer when interacts with icosehadral capsid. Interacts with capsid protein, and with Movement protein.

It is found in the virion. It localises to the host cell junction. The protein localises to the host plasmodesma. Functionally, plays a role in virus cell-to-cell and plant-to-plant transmission. Interacts with virion icosahedral capsid and movement protein, thereby facilitating virion cell-to-cell transmission through plasmodesmata opened by viral movement protein. Also interacts with aphid transmission factor, attaching the virion to aphid stylet when the animal feeds on an virus infected plant. Aphid saliva may later detach the virion, inducing release of infectious particles when the animal feeds on a new plant. This is Virion-associated protein from Scrophularia californica (California bee plant).